The primary structure comprises 526 residues: MECVGVQNVGAMAVLTRPRLNRWSGGELCQEKSIFLAYEQYESKCNSSSGSDSCVVDKEDFADEEDYIKAGGSQLVFVQMQQKKDMDQQSKLSDELRQISAGQTVLDLVVIGCGPAGLALAAESAKLGLNVGLVGPDLPFTNNYGVWEDEFKDLGLQACIEHVWRDTIVYLDDDEPILIGRAYGRVSRHFLHEELLKRCVEAGVLYLNSKVDRIVEATNGQSLVECEGDVVIPCRFVTVASGAASGKFLQYELGSPRVSVQTAYGVEVEVDNNPFDPSLMVFMDYRDYLRHDAQSLEAKYPTFLYAMPMSPTRVFFEETCLASKDAMPFDLLKKKLMLRLNTLGVRIKEIYEEEWSYIPVGGSLPNTEQKTLAFGAAASMVHPATGYSVVRSLSEAPKCASVLANILRQHYSKNMLTSSSIPSISTQAWNTLWPQERKRQRSFFLFGLALILQLDIEGIRSFFRAFFRVPKWMWQGFLGSSLSSADLMLFAFYMFIIAPNDMRKGLIRHLLSDPTGATLIRTYLTF.

An NAD(+)-binding site is contributed by 108-136 (LVVIGCGPAGLALAAESAKLGLNVGLVGP). 2 helical membrane passes run 443–463 (FFLF…RSFF) and 477–497 (FLGS…MFII).

It belongs to the lycopene cyclase family.

Its subcellular location is the plastid. The protein localises to the chloroplast membrane. The catalysed reaction is a carotenoid psi-end group = a carotenoid epsilon-end group. The protein operates within carotenoid biosynthesis; alpha-zeacarotene biosynthesis. It participates in carotenoid biosynthesis; delta-carotene biosynthesis. Its function is as follows. Catalyzes the single cyclization reaction which converts lycopene to delta-carotene and neurosporene to alpha-zeacarotene. Required for lutein biosynthesis. The chain is Lycopene epsilon cyclase, chloroplastic from Solanum lycopersicum (Tomato).